The primary structure comprises 186 residues: Ribosome-recycling factor (186 aa).

This sequence belongs to the RRF family.

It is found in the cytoplasm. In terms of biological role, responsible for the release of ribosomes from messenger RNA at the termination of protein biosynthesis. May increase the efficiency of translation by recycling ribosomes from one round of translation to another. The sequence is that of Ribosome-recycling factor from Methylibium petroleiphilum (strain ATCC BAA-1232 / LMG 22953 / PM1).